We begin with the raw amino-acid sequence, 234 residues long: Coiled-coil domain-containing protein 194 (234 aa).

A signal peptide spans 1–43; sequence MAEPGPEPGRAWRLLALCGAAVFLAAAAAGGALVAWNLAASTA. A disordered region spans residues 44-63; it reads RSPRCPEPEQMNATVRPPDS. Residues 67–171 adopt a coiled-coil conformation; sequence VEELRRRLAE…LQRAGAAEAA (105 aa). A disordered region spans residues 194 to 234; sequence GTLRKESRLRPRSGSRTKPSISHRPKSGSTKGCRRPPRDPQ. Positions 203–219 are enriched in basic residues; the sequence is RPRSGSRTKPSISHRPK.

This Mus musculus (Mouse) protein is Coiled-coil domain-containing protein 194.